A 138-amino-acid chain; its full sequence is Large ribosomal subunit protein uL16 (138 aa).

A compositionally biased stretch (basic residues) spans methionine 1–serine 16. Residues methionine 1 to threonine 25 are disordered.

Belongs to the universal ribosomal protein uL16 family. In terms of assembly, part of the 50S ribosomal subunit.

Its function is as follows. Binds 23S rRNA and is also seen to make contacts with the A and possibly P site tRNAs. The polypeptide is Large ribosomal subunit protein uL16 (Rhodococcus erythropolis (strain PR4 / NBRC 100887)).